The primary structure comprises 229 residues: MLSRLGARVLYCLAGLALLASGGCALMPREPLVQLPTTARAEPRPMGPATGSIFASSYAGNPLFEDRRPRNVGDILTIVITENVNATKNSGTNASRTGSTSMAFDAVPKALAGLFSSSSNASINGANALKASGGASAANTFNGTITVTVLEVLANGNLVVSGEKQLAINQGAEFIRFSGVVNPRTITGDNGVLSTQVADARIEYTAKGYIDEAQNMGWLQRFFLNVSPF.

An N-terminal signal peptide occupies residues Met1–Gly23. A lipid anchor (N-palmitoyl cysteine) is attached at Cys24. Cys24 carries S-diacylglycerol cysteine lipidation.

This sequence belongs to the FlgH family. In terms of assembly, the basal body constitutes a major portion of the flagellar organelle and consists of four rings (L,P,S, and M) mounted on a central rod.

It localises to the cell outer membrane. It is found in the bacterial flagellum basal body. Functionally, assembles around the rod to form the L-ring and probably protects the motor/basal body from shearing forces during rotation. The protein is Flagellar L-ring protein of Cupriavidus pinatubonensis (strain JMP 134 / LMG 1197) (Cupriavidus necator (strain JMP 134)).